The following is a 646-amino-acid chain: MNLRTIARKNILGNLQRYVAYFLSCVFAVSVFFVFTSFIFHPDVNEDNIYGGSLVKTCLSAALVVIIVFCIFFITYSNSAFLQARKKEFGLLTLFGTSKQQLRKMIYYEQSLISLAAIAAGIGAGLLFSKLFFMIMTWMLSVKVPISFAIVPKAFVMTIAGFLILFQTLLILSLGRIRKLEIIELIKSAKKPKSLPVYSKWLTVLSLLCLGSGYYLSATANAIDMMFRVFPILILVLIGTYFFFTQSSVAFFRMLYRKKHSFYKGTNIIVRSNMIFRLKDHARMLFLTSVITAVILTATGVIYMFYSDLQRQEEQSIPQSVSWVEKDASRFQVMKPETAENTLKKAHAVITYKVDATGIPVTFQSDLPYGNKKMEAEALLISEKVYNQVAKEKGFPVIHLQENEAFINVSFQMMVKDTFGEGETAAFHMKSGKTLSYVMKKQQNKGILMSVDGVSRLLVVSEKSFDSLSQDVPLKEQMRMVGYELEHWQETVDVSEKLENMVPKEHTSDFQTRAPSYQIVKQGVALMLFIGLFVSVLFFIVQGSMLYLRMFTEIEDTGVQVLALKRIGVTDKEIHSILGKQIGFLFFIPFIAGTIHAGFAYAALSNMLNSNLFLEAVIVIFIYFVFQALYYIVTRHIYKRAVLQRM.

A run of 10 helical transmembrane segments spans residues 20–40 (AYFL…SFIF), 54–74 (LVKT…IFFI), 115–135 (LAAI…FFMI), 154–174 (AFVM…ILSL), 203–223 (TVLS…ANAI), 232–252 (ILIL…VAFF), 285–305 (LFLT…IYMF), 523–543 (GVAL…IVQG), 582–602 (IGFL…FAYA), and 613–633 (FLEA…YYIV).

It belongs to the ABC-4 integral membrane protein family.

Its subcellular location is the cell membrane. This is an uncharacterized protein from Bacillus subtilis (strain 168).